The chain runs to 1958 residues: Sodium channel protein type 10 subunit alpha (1958 aa).

Topologically, residues 1-125 (MEFPFGSVGT…FNLIRRTAIK (125 aa)) are cytoplasmic. The segment at 27 to 54 (QIAAHRAAKKGRPKQRGQKDKSEKPRPQ) is disordered. The span at 32 to 42 (RAAKKGRPKQR) shows a compositional bias: basic residues. The span at 43–54 (GQKDKSEKPRPQ) shows a compositional bias: basic and acidic residues. One copy of the I repeat lies at 116-404 (FNLIRRTAIK…VTMAYEEQSQ (289 aa)). A helical transmembrane segment spans residues 126 to 149 (VSVHSWFSIFITVTILVNCVCMTR). Topologically, residues 150 to 154 (TDLPE) are extracellular. Residues 155–174 (KLEYAFTVVYTFEALIKILA) traverse the membrane as a helical segment. Residues 175–187 (RGFCLNEFTYLRD) are Cytoplasmic-facing. A helical membrane pass occupies residues 188–206 (PWNWLDFSVITLAYVGAAI). Over 207–212 (DLRGIS) the chain is Extracellular. A helical; Voltage-sensor transmembrane segment spans residues 213–232 (GLRTFRVLRALKTVSVIPGL). The Cytoplasmic portion of the chain corresponds to 233–248 (KVIVGALIHSVRKLAD). The chain crosses the membrane as a helical span at residues 249-272 (VTILTVFCLSVFALVGLQLFKGNL). The Extracellular portion of the chain corresponds to 273-340 (KNKCIKNGTD…PDFNYTSFDS (68 aa)). Cysteine 276 and cysteine 318 are disulfide-bonded. 4 N-linked (GlcNAc...) asparagine glycosylation sites follow: asparagine 279, asparagine 288, asparagine 311, and asparagine 334. The segment at residues 341 to 365 (FAWAFLSLFRLMTQDSWERLYQQTL) is an intramembrane region (pore-forming). The Extracellular portion of the chain corresponds to 366–372 (RASGKMY). The chain crosses the membrane as a helical span at residues 373–398 (MVFFVLVIFLGSFYLVNLILAVVTMA). Topologically, residues 399 to 658 (YEEQSQATIA…KWKKFKMVLF (260 aa)) are cytoplasmic. Serine 440, serine 443, serine 466, and serine 478 each carry phosphoserine. 2 disordered regions span residues 444 to 483 (HNGS…PYNQ) and 539 to 583 (GRGA…APEG). Residues 549 to 560 (PRSPLPQSPNPG) show a composition bias toward pro residues. A phosphoserine mark is found at serine 611 and serine 614. The stretch at 646–910 (CCPKWKKFKM…EDDGEVNNLQ (265 aa)) is one II repeat. A helical transmembrane segment spans residues 659 to 683 (ELVTDPFAELTITLCIVVNTVFMAM). At 684 to 694 (EHYPMTDAFDA) the chain is on the extracellular side. Residues 695–718 (MLQAGNIVFTVFFTMEMAFKIIAF) traverse the membrane as a helical segment. The Cytoplasmic segment spans residues 719–726 (DPYYYFQK). The helical transmembrane segment at 727–746 (KWNIFDCVIVTVSLLELSTS) threads the bilayer. The Extracellular portion of the chain corresponds to 747–752 (KKGSLS). Residues 753-772 (VLRTFRLLRVFKLAKSWPTL) traverse the membrane as a helical; Voltage-sensor segment. Topologically, residues 773-788 (NMLIKIIGNSVGALGN) are cytoplasmic. Residues 789–809 (LTFILAIIVFIFALVGKQLLS) form a helical membrane-spanning segment. Residues 810–833 (ENYGCRRDGISVWNGERLRWHMCD) are Extracellular-facing. The segment at residues 834–854 (FFHSFLVVFRILCGEWIENMW) is an intramembrane region (pore-forming). Over 855–863 (VCMEVSQDY) the chain is Extracellular. Residues cysteine 856 and cysteine 865 are joined by a disulfide bond. A helical membrane pass occupies residues 864-889 (ICLTLFLTVMVLGNLVVLNLFIALLL). The Cytoplasmic portion of the chain corresponds to 890–1148 (NSFSADNLTA…GWQVRKTCYR (259 aa)). The interval 1006-1094 (DLDELEEDVE…SEGSTVDCPD (89 aa)) is disordered. Positions 1017-1038 (ASQSSWQEESPKGQQELLQQVQ) are enriched in polar residues. The III repeat unit spans residues 1141 to 1450 (QVRKTCYRIV…KKYYNAMKKL (310 aa)). The chain crosses the membrane as a helical span at residues 1149–1172 (IVEHSWFESFIIFMILLSSGALAF). The Extracellular segment spans residues 1173-1185 (EDNYLEEKPRVKS). The helical transmembrane segment at 1186–1211 (VLEYTDRVFTFIFVFEMLLKWVAYGF) threads the bilayer. At 1212–1217 (KKYFTN) the chain is on the cytoplasmic side. The helical transmembrane segment at 1218–1239 (AWCWLDFLIVNISLTSLIAKIL) threads the bilayer. The Extracellular segment spans residues 1240–1243 (EYSD). Residues 1244–1265 (VASIKALRTLRALRPLRALSRF) traverse the membrane as a helical; Voltage-sensor segment. At 1266–1284 (EGMRVVVDALVGAIPSIMN) the chain is on the cytoplasmic side. Residues 1285–1312 (VLLVCLIFWLIFSIMGVNLFAGKFSRCV) form a helical membrane-spanning segment. Residues 1313–1354 (DTRSNPFSVVNSTFVTNKSDCYNQNNTGHFFWVNVKVNFDNV) lie on the Extracellular side of the membrane. Residues asparagine 1323, asparagine 1329, and asparagine 1337 are each glycosylated (N-linked (GlcNAc...) asparagine). An intramembrane region (pore-forming) is located at residues 1355–1376 (AMGYLALLQVATFKGWMDIMYA). The Extracellular portion of the chain corresponds to 1377-1392 (AVDSRDINSQPNWEES). The chain crosses the membrane as a helical span at residues 1393–1419 (LYMYLYFVVFIIFGGFFTLNLFVGVII). The Cytoplasmic portion of the chain corresponds to 1420 to 1472 (DNFNQQKKKLGGQDIFMTEEQKKYYNAMKKLGSKKPQKPIPRPLNKYQGFVFD). Residue serine 1452 is modified to Phosphoserine; by PKC. One copy of the IV repeat lies at 1459–1758 (IPRPLNKYQG…WEKFDPEATQ (300 aa)). Residues 1473-1496 (IVTRQAFDIIIMALICLNMITMMV) traverse the membrane as a helical segment. The Extracellular segment spans residues 1497 to 1507 (ETDNQSEEKTK). Asparagine 1500 is a glycosylation site (N-linked (GlcNAc...) asparagine). The helical transmembrane segment at 1508 to 1531 (VLGRINQFFVAVFTGECVMKMFAL) threads the bilayer. The Cytoplasmic segment spans residues 1532 to 1537 (RQYYFT). Residues 1538-1561 (NGWNVFDFIVVILSISSLLFSAIL) form a helical membrane-spanning segment. Topologically, residues 1562 to 1573 (SSLESYFSPTLL) are extracellular. Residues 1574-1595 (RVIRLARIGRILRLIRAAKGIR) form a helical; Voltage-sensor membrane-spanning segment. Topologically, residues 1596–1610 (TLLFALMMSLPALFN) are cytoplasmic. Residues 1611 to 1633 (IGLLLFLVMFIYSIFGMASFANV) form a helical membrane-spanning segment. At 1634–1647 (IDEAGIDDMFNFKT) the chain is on the extracellular side. The segment at residues 1648–1670 (FGNSMLCLFQITTSAGWDGLLSP) is an intramembrane region (pore-forming). Over 1671–1698 (ILNTGPPYCDPNRPNSNGSKGNCGSPAV) the chain is Extracellular. Asparagine 1687 carries N-linked (GlcNAc...) asparagine glycosylation. Residues 1699–1723 (GILFFTTYIIISFLIVVNMYIAVIL) form a helical membrane-spanning segment. Residues 1724-1958 (ENFNVATEES…AKEGKSPGPQ (235 aa)) lie on the Cytoplasmic side of the membrane. One can recognise an IQ domain in the interval 1852–1881 (EDISATIIQKAYRNYMLQRSLMLSNPLHVP). The interval 1901-1958 (NDNGGLPDKSETASATSFPPSYDSVTRGLSDRANISTSSSMQNEDEVTAKEGKSPGPQ) is disordered. Residues 1933-1942 (ANISTSSSMQ) are compositionally biased toward polar residues. The segment covering 1947 to 1958 (VTAKEGKSPGPQ) has biased composition (basic and acidic residues).

This sequence belongs to the sodium channel (TC 1.A.1.10) family. Nav1.8/SCN10A subfamily. In terms of assembly, the channel consists of an ion conducting pore forming alpha-subunit regulated by one or more associated auxiliary subunits SCN1B, SCN2B and SCN3B; electrophysiological properties may vary depending on the type of the associated beta subunits. Found in a number of complexes with PRX, DYNLT1 and PDZD2. Interacts with proteins such as FSTL1, PRX, DYNLT1, PDZD2, S100A10 and many others. Interacts with NEDD4 and NEDD4L. In terms of processing, ubiquitinated by NEDD4L; which promotes its endocytosis. Post-translationally, phosphorylation at Ser-1452 by PKC in a highly conserved cytoplasmic loop slows inactivation of the sodium channel and reduces peak sodium currents. Lacks the cysteine which covalently binds the conotoxin GVIIJ. This cysteine (position 815) is speculated in other sodium channel subunits alpha to be implied in covalent binding with the sodium channel subunit beta-2 or beta-4. Expressed in dorsal root ganglion and trigeminal ganglion.

The protein resides in the cell membrane. It carries out the reaction Na(+)(in) = Na(+)(out). Functionally, tetrodotoxin-resistant channel that mediates the voltage-dependent sodium ion permeability of excitable membranes. Assuming opened or closed conformations in response to the voltage difference across the membrane, the protein forms a sodium-selective channel through which sodium ions may pass in accordance with their electrochemical gradient. Plays a role in neuropathic pain mechanisms. This is Sodium channel protein type 10 subunit alpha from Mus musculus (Mouse).